The primary structure comprises 169 residues: ATP synthase subunit b (169 aa).

A helical membrane pass occupies residues 12 to 32; that stretch reads HIYLGNALWYLICFAILLLLI.

The protein belongs to the ATPase B chain family. As to quaternary structure, F-type ATPases have 2 components, F(1) - the catalytic core - and F(0) - the membrane proton channel. F(1) has five subunits: alpha(3), beta(3), gamma(1), delta(1), epsilon(1). F(0) has three main subunits: a(1), b(2) and c(10-14). The alpha and beta chains form an alternating ring which encloses part of the gamma chain. F(1) is attached to F(0) by a central stalk formed by the gamma and epsilon chains, while a peripheral stalk is formed by the delta and b chains.

The protein localises to the cell membrane. Functionally, f(1)F(0) ATP synthase produces ATP from ADP in the presence of a proton or sodium gradient. F-type ATPases consist of two structural domains, F(1) containing the extramembraneous catalytic core and F(0) containing the membrane proton channel, linked together by a central stalk and a peripheral stalk. During catalysis, ATP synthesis in the catalytic domain of F(1) is coupled via a rotary mechanism of the central stalk subunits to proton translocation. Its function is as follows. Component of the F(0) channel, it forms part of the peripheral stalk, linking F(1) to F(0). This is ATP synthase subunit b from Lactobacillus helveticus (strain DPC 4571).